The primary structure comprises 109 residues: Glutaredoxin-8 (109 aa).

In terms of domain architecture, Glutaredoxin spans 5-109; the sequence is VTKAEEMIKS…EELTKIGLLP (105 aa). Cys25 and Cys28 are disulfide-bonded.

The protein belongs to the glutaredoxin family. Monomer.

The protein resides in the cytoplasm. Glutathione-dependent oxidoreductase with lower activity compared to the other members of the glutaredoxin family. The disulfide bond functions as an electron carrier in the glutathione-dependent synthesis of deoxyribonucleotides by the enzyme ribonucleotide reductase. The protein is Glutaredoxin-8 (GRX8) of Saccharomyces cerevisiae (strain ATCC 204508 / S288c) (Baker's yeast).